The sequence spans 499 residues: MIRATSLYAAIDLGSNSFHMLVVREVAGTLQTLARIKRKVRLAAGLYGDNRLSSDAMQRGWQCLRLFAEHLQDIPPTQVRVVATATLRLATNAAEFLGPASAILGCPVQVISGEEEARLIYQGVAHTTGGSDERLVVDIGGGSTELVVGRGAQALELFSLEMGCVTWLERYFNDRSLTRENFERAEQAAREKIRPVAFRLLAQGWQVCVGASGTVQALQEIMVAQGMDEHITLSKLLQLKQRAIHCGKLEELEIEGLTLERALVFPSGLAILLAVFAELGITTMTLAGGALREGMMYGMMALPVGGDIRQRTLENLQRRYQLDTEQAQRVTWLADGFARQVAEAWQLDERCFTLLRCASMIHEIGLSIDIKRAPQHAAYLVRHTDLPGFTPAQQKLIATLLQNQSNHINLTQLNEQNCLAPRIAQRLCRLMRLAIIFASRRRDDALPAVELRAAEETLYVILPQGWLSQHPLRAEYLEQESQWQSYVHWPLLLEETSQV.

This sequence belongs to the GppA/Ppx family. GppA subfamily.

The enzyme catalyses guanosine 3'-diphosphate 5'-triphosphate + H2O = guanosine 3',5'-bis(diphosphate) + phosphate + H(+). It functions in the pathway purine metabolism; ppGpp biosynthesis; ppGpp from GTP: step 2/2. Catalyzes the conversion of pppGpp to ppGpp. Guanosine pentaphosphate (pppGpp) is a cytoplasmic signaling molecule which together with ppGpp controls the 'stringent response', an adaptive process that allows bacteria to respond to amino acid starvation, resulting in the coordinated regulation of numerous cellular activities. This is Guanosine-5'-triphosphate,3'-diphosphate pyrophosphatase from Sodalis glossinidius (strain morsitans).